The sequence spans 313 residues: Glutaminase (313 aa).

Residues Ser-64, Asn-116, Glu-163, Asn-170, Tyr-194, Tyr-246, and Val-264 each coordinate substrate.

This sequence belongs to the glutaminase family. In terms of assembly, homotetramer.

It catalyses the reaction L-glutamine + H2O = L-glutamate + NH4(+). In Exiguobacterium sp. (strain ATCC BAA-1283 / AT1b), this protein is Glutaminase.